A 278-amino-acid polypeptide reads, in one-letter code: Protein FixR (278 aa).

Position 40–64 (40–64 (LLTGASRGIGHATAKLFSEAGWRII)) interacts with NAD(+). Ser-175 contacts substrate. The active-site Proton acceptor is the Tyr-189.

It belongs to the short-chain dehydrogenases/reductases (SDR) family.

This Bradyrhizobium diazoefficiens (strain JCM 10833 / BCRC 13528 / IAM 13628 / NBRC 14792 / USDA 110) protein is Protein FixR (fixR).